The chain runs to 396 residues: 3-amino-4-hydroxybenzoic acid synthase (396 aa).

Residues 1 to 29 (MSSSPSPSPSSSSSSSASSSASSSPSSSS) form a disordered region.

The protein belongs to the archaeal-type DHQ synthase family. GriH subfamily. Monomer. Mn(2+) serves as cofactor.

The enzyme catalyses 2-amino-4,5-dihydroxy-6-oxo-7-(phosphooxy)heptanoate = 3-amino-4-hydroxybenzoate + phosphate + 2 H2O + H(+). Its function is as follows. Catalyzes the cyclization of 2-amino-4,5-dihydroxy-6-one-heptanoic acid-7-phosphate to yield 3-amino-4-hydroxybenzoic acid (3,4-AHBA). The protein is 3-amino-4-hydroxybenzoic acid synthase (griH) of Streptomyces griseus subsp. griseus (strain JCM 4626 / CBS 651.72 / NBRC 13350 / KCC S-0626 / ISP 5235).